We begin with the raw amino-acid sequence, 172 residues long: ATP synthase subunit b (172 aa).

A helical transmembrane segment spans residues 5–24; the sequence is LLMLLLLGSVSLFANEAAAS.

Belongs to the ATPase B chain family. In terms of assembly, F-type ATPases have 2 components, F(1) - the catalytic core - and F(0) - the membrane proton channel. F(1) has five subunits: alpha(3), beta(3), gamma(1), delta(1), epsilon(1). F(0) has three main subunits: a(1), b(2) and c(10-14). The alpha and beta chains form an alternating ring which encloses part of the gamma chain. F(1) is attached to F(0) by a central stalk formed by the gamma and epsilon chains, while a peripheral stalk is formed by the delta and b chains.

Its subcellular location is the cell inner membrane. Its function is as follows. F(1)F(0) ATP synthase produces ATP from ADP in the presence of a proton or sodium gradient. F-type ATPases consist of two structural domains, F(1) containing the extramembraneous catalytic core and F(0) containing the membrane proton channel, linked together by a central stalk and a peripheral stalk. During catalysis, ATP synthesis in the catalytic domain of F(1) is coupled via a rotary mechanism of the central stalk subunits to proton translocation. Component of the F(0) channel, it forms part of the peripheral stalk, linking F(1) to F(0). This Nitratiruptor sp. (strain SB155-2) protein is ATP synthase subunit b.